The sequence spans 246 residues: Envelope glycoprotein gp95 (246 aa).

Over 1–192 the chain is Extracellular; the sequence is IPSRPVGGPC…EWAVHLLKGL (192 aa). N-linked (GlcNAc...) asparagine; by host glycosylation is present at Asn-31. Residues Cys-50 and Cys-86 are joined by a disulfide bond. A fusion peptide region spans residues 58-78; the sequence is GPTARIFASILAPGVAAAQAL. Residues 75-125 are a coiled coil; that stretch reads AQALKEIERLACWSVKQANLTTSLLGDLLDDVTSIRHAVLQNRAAIDFLLL. Asn-93 is a glycosylation site (N-linked (GlcNAc...) asparagine; by host). The tract at residues 114-130 is immunosuppression; that stretch reads LQNRAAIDFLLLAHGHG. A disulfide bridge connects residues Cys-131 and Cys-138. A glycan (N-linked (GlcNAc...) asparagine; by host) is linked at Asn-141. Residues 143–173 adopt a coiled-coil conformation; the sequence is SDHSESIQKKFQLMKEHVNKIGVDSDPIGSW. A helical transmembrane segment spans residues 193–213; sequence LLGLVVILLLVVCLPCLLQIV. 2 S-palmitoyl cysteine; by host lipidation sites follow: Cys-205 and Cys-208. Topologically, residues 214–246 are cytoplasmic; that stretch reads CGNIRKMINNSISYHTEYKKLQKAYGQPESRIV.

Belongs to the Alpharetroviruses envelope glycoprotein family. As to quaternary structure, heterodimer with the transmembrane protein. The mature envelope protein (Env) consists of a trimer of SU-TM heterodimers attached by a labile interchain disulfide bond. In terms of assembly, heterodimer with the surface protein. The mature envelope protein (Env) consists of a trimer of SU-TM heterodimers attached by a labile interchain disulfide bond. Specific enzymatic cleavages in vivo yield mature proteins. Envelope glycoproteins are synthesized as an inactive precursor that is N-glycosylated and processed likely by host cell furin or by a furin-like protease in the Golgi to yield the mature SU and TM proteins. The cleavage site between SU and TM requires the minimal sequence [KR]-X-[KR]-R. Post-translationally, the transmembrane protein is palmitoylated. Palmitoylation is necessary for glycoprotein function and infectivity.

It is found in the virion membrane. The protein resides in the host cell membrane. Its function is as follows. The surface protein (SU) attaches the virus to the host cell by binding to its receptor. This interaction triggers the refolding of the transmembrane protein (TM) thereby unmasking its fusion peptide and the formation of a reactive thiolate to activate its fusogenic potential. Fusion occurs at the host cell plasma membrane. The transmembrane protein (TM) acts as a class I viral fusion protein. Under the current model, the protein has at least 3 conformational states: pre-fusion native state, pre-hairpin intermediate state, and post-fusion hairpin state. During viral and target cell membrane fusion, the coiled coil regions (heptad repeats) assume a trimer-of-hairpins structure, positioning the fusion peptide in close proximity to the C-terminal region of the ectodomain. The formation of this structure appears to drive apposition and subsequent fusion of viral and target cell membranes. Membranes fusion leads to delivery of the nucleocapsid into the cytoplasm. This is Envelope glycoprotein gp95 (env) from Galliformes.